The chain runs to 465 residues: Alpha-galacturonidase (465 aa).

11–78 (ITIAYIGGGS…GKWLYKACET (68 aa)) serves as a coordination point for NAD(+). A substrate-binding site is contributed by Asn-157. Position 179 (Cys-179) interacts with Mn(2+). The Proton donor role is filled by His-180. Residue His-216 participates in Mn(2+) binding.

The protein belongs to the glycosyl hydrolase 4 family. Homotetramer. The cofactor is NAD(+). Requires Mn(2+) as cofactor.

The enzyme catalyses [(1-&gt;4)-alpha-D-galacturonosyl](n) + H2O = alpha-D-galacturonate + [(1-&gt;4)-alpha-D-galacturonosyl](n-1). Alpha-galacturonidase able to catalyze the hydrolysis of the chromogenic substrate p-nitrophenyl-alpha-D-galacturonic acid (pNPalphaGalUA). It is probable that alpha-1,4-di-galacturonate (GalUA(2)) is the naturally occurring substrate. This is Alpha-galacturonidase from Thermoanaerobacterium saccharolyticum (strain DSM 8691 / JW/SL-YS485).